The chain runs to 325 residues: MSEGDADGGGREIWIEKYRPQTLDDIVGHESITERLKQYIAQNDLPHLLFAGPAGVGKTTAATAIAKEVYGDDWRENFLELNASDQRGIDVVRDRIKSFARASFGGYDHRIIFLDEADALTSDAQSALRRTMEQFSDNTRFILSCNYSSQIIDPIQSRCAVFRFSPLGDAAVDEQIRIIADTEGIELTDDGVDALVYAADGDMRKAINGLQAAAVMGGTVDEEAVYTITSTARPEEIREMVTEAMDGDFTAARSQLETLLTDVGIAGGDIIDQLHRSVWEFDLEEREAVQLMERIGEADYRITAGASEQLQLEALLAALARGNET.

52–59 is an ATP binding site; sequence GPAGVGKT.

It belongs to the activator 1 small subunits family. RfcS subfamily. As to quaternary structure, heteromultimer composed of small subunits (RfcS) and large subunits (RfcL).

Part of the RFC clamp loader complex which loads the PCNA sliding clamp onto DNA. The polypeptide is Replication factor C small subunit (Natronomonas pharaonis (strain ATCC 35678 / DSM 2160 / CIP 103997 / JCM 8858 / NBRC 14720 / NCIMB 2260 / Gabara) (Halobacterium pharaonis)).